A 472-amino-acid chain; its full sequence is UDP-N-acetylmuramate--L-alanine ligase (472 aa).

An ATP-binding site is contributed by 121–127 (GTHGKTT).

It belongs to the MurCDEF family.

The protein resides in the cytoplasm. The enzyme catalyses UDP-N-acetyl-alpha-D-muramate + L-alanine + ATP = UDP-N-acetyl-alpha-D-muramoyl-L-alanine + ADP + phosphate + H(+). It functions in the pathway cell wall biogenesis; peptidoglycan biosynthesis. Cell wall formation. This Hahella chejuensis (strain KCTC 2396) protein is UDP-N-acetylmuramate--L-alanine ligase.